A 301-amino-acid polypeptide reads, in one-letter code: Protease HtpX (301 aa).

2 helical membrane passes run 4-24 (IGLFLLTNLAILVVLGVVLFI) and 44-64 (TGLLIIAAVIGFGGSFISLAM). H150 contacts Zn(2+). Residue E151 is part of the active site. H154 is a binding site for Zn(2+). The next 2 helical transmembrane spans lie at 165–185 (LIQGVVNTFVVFFSRIIGHFV) and 201–221 (FITSIFAQIVLGILASVIVMW). E227 contacts Zn(2+).

This sequence belongs to the peptidase M48B family. Zn(2+) is required as a cofactor.

It localises to the cell inner membrane. The protein is Protease HtpX of Alkalilimnicola ehrlichii (strain ATCC BAA-1101 / DSM 17681 / MLHE-1).